Here is a 95-residue protein sequence, read N- to C-terminus: Aspartyl/glutamyl-tRNA(Asn/Gln) amidotransferase subunit C (95 aa).

Residues A55–V67 are compositionally biased toward basic and acidic residues. Residues A55–T83 are disordered.

It belongs to the GatC family. As to quaternary structure, heterotrimer of A, B and C subunits.

The enzyme catalyses L-glutamyl-tRNA(Gln) + L-glutamine + ATP + H2O = L-glutaminyl-tRNA(Gln) + L-glutamate + ADP + phosphate + H(+). The catalysed reaction is L-aspartyl-tRNA(Asn) + L-glutamine + ATP + H2O = L-asparaginyl-tRNA(Asn) + L-glutamate + ADP + phosphate + 2 H(+). Its function is as follows. Allows the formation of correctly charged Asn-tRNA(Asn) or Gln-tRNA(Gln) through the transamidation of misacylated Asp-tRNA(Asn) or Glu-tRNA(Gln) in organisms which lack either or both of asparaginyl-tRNA or glutaminyl-tRNA synthetases. The reaction takes place in the presence of glutamine and ATP through an activated phospho-Asp-tRNA(Asn) or phospho-Glu-tRNA(Gln). The chain is Aspartyl/glutamyl-tRNA(Asn/Gln) amidotransferase subunit C from Natranaerobius thermophilus (strain ATCC BAA-1301 / DSM 18059 / JW/NM-WN-LF).